The primary structure comprises 389 residues: Acetoin utilization protein AcuC (389 aa).

It belongs to the histone deacetylase family.

It participates in ketone degradation; acetoin degradation. Role in growth on acetoin or butanediol. Involved in the breakdown of these compounds used as a carbon source. The chain is Acetoin utilization protein AcuC (acuC) from Staphylococcus aureus (strain COL).